The primary structure comprises 254 residues: Cell division protein DivIB (254 aa).

At 1–21 the chain is on the cytoplasmic side; sequence MPNAQIPVLKKNRTKKRTSRK. A helical membrane pass occupies residues 22 to 42; that stretch reads IAILLILLFIVLLAVLFFRSS. The Extracellular portion of the chain corresponds to 43–254; sequence LSRVSEIRFD…EEGQEKDTTQ (212 aa). A POTRA domain is found at 44-112; sequence SRVSEIRFDG…GIIAIHIKEF (69 aa).

This sequence belongs to the FtsQ/DivIB family. DivIB subfamily.

The protein resides in the cell membrane. In terms of biological role, cell division protein that may be involved in stabilizing or promoting the assembly of the division complex. In Paenibacillus polymyxa (strain E681), this protein is Cell division protein DivIB.